The following is a 185-amino-acid chain: Ribosome-recycling factor (185 aa).

This sequence belongs to the RRF family.

It is found in the cytoplasm. Responsible for the release of ribosomes from messenger RNA at the termination of protein biosynthesis. May increase the efficiency of translation by recycling ribosomes from one round of translation to another. This is Ribosome-recycling factor from Geobacter sulfurreducens (strain ATCC 51573 / DSM 12127 / PCA).